Reading from the N-terminus, the 332-residue chain is Mitoferrin-1 (332 aa).

Solcar repeat units lie at residues 31 to 119, 129 to 213, and 220 to 314; these read ASLG…IKRS, NSHI…MQEH, and YRPE…FKYF. A run of 6 helical transmembrane segments spans residues 33–52, 94–113, 131–150, 188–207, 222–241, and 289–308; these read LGTHMTAGAVAGILEHTVMY, GLNITVLGAGPAHALYFACY, HIANGVAGSVATVLHDAVMN, SYSTQLTMNIPFQAVHFITY, PETHIISGAAAGAVSAAVTT, and GIQARVIYQMPSTAIAWSVY.

It belongs to the mitochondrial carrier (TC 2.A.29) family. In terms of tissue distribution, highly expressed in hematopoietic organs, Expressed in the intermediate cell mass (ICM), a tissue equivalent to the mammalian extraembryonic yolk-sac blood islands. Colocalizes with gata1.

It is found in the mitochondrion inner membrane. It carries out the reaction Fe(2+)(in) = Fe(2+)(out). Functionally, mitochondrial iron transporter that specifically mediates iron uptake in developing erythroid cells, thereby playing an essential role in heme biosynthesis. The polypeptide is Mitoferrin-1 (slc25a37) (Danio rerio (Zebrafish)).